Consider the following 654-residue polypeptide: Translation factor GUF1, mitochondrial (654 aa).

The 181-residue stretch at 57-237 (ENYRNFSIVA…SVIKNIPSPV (181 aa)) folds into the tr-type G domain. GTP-binding positions include 66–73 (AHVDHGKS), 130–134 (DTPGH), and 184–187 (NKID).

This sequence belongs to the TRAFAC class translation factor GTPase superfamily. Classic translation factor GTPase family. LepA subfamily.

The protein localises to the mitochondrion inner membrane. The enzyme catalyses GTP + H2O = GDP + phosphate + H(+). In terms of biological role, promotes mitochondrial protein synthesis. May act as a fidelity factor of the translation reaction, by catalyzing a one-codon backward translocation of tRNAs on improperly translocated ribosomes. Binds to mitochondrial ribosomes in a GTP-dependent manner. The sequence is that of Translation factor GUF1, mitochondrial from Candida dubliniensis (strain CD36 / ATCC MYA-646 / CBS 7987 / NCPF 3949 / NRRL Y-17841) (Yeast).